We begin with the raw amino-acid sequence, 328 residues long: DNA-directed RNA polymerase subunit alpha (328 aa).

The segment at 1–231 is alpha N-terminal domain (alpha-NTD); that stretch reads MIYQMQMPAK…EHVTFFADFS (231 aa). Residues 252 to 328 are alpha C-terminal domain (alpha-CTD); that stretch reads MRKLFNTKIE…MDITKYQMKG (77 aa).

Belongs to the RNA polymerase alpha chain family. In terms of assembly, homodimer. The RNAP catalytic core consists of 2 alpha, 1 beta, 1 beta' and 1 omega subunit. When a sigma factor is associated with the core the holoenzyme is formed, which can initiate transcription.

The enzyme catalyses RNA(n) + a ribonucleoside 5'-triphosphate = RNA(n+1) + diphosphate. In terms of biological role, DNA-dependent RNA polymerase catalyzes the transcription of DNA into RNA using the four ribonucleoside triphosphates as substrates. The sequence is that of DNA-directed RNA polymerase subunit alpha from Chlorobium limicola (strain DSM 245 / NBRC 103803 / 6330).